The sequence spans 170 residues: Ubiquitin-conjugating enzyme E2 G1 (170 aa).

An N-acetylmethionine modification is found at Met-1. Thr-2 is modified (N-acetylthreonine; in Ubiquitin-conjugating enzyme E2 G1, N-terminally processed). The UBC core domain occupies 5–166 (QSALLLRRQL…VARCVRKSQE (162 aa)). Cys-90 serves as the catalytic Glycyl thioester intermediate.

Belongs to the ubiquitin-conjugating enzyme family. Autoubiquitinated in vitro. In terms of tissue distribution, widely expressed, mainly in skeletal muscle.

It catalyses the reaction S-ubiquitinyl-[E1 ubiquitin-activating enzyme]-L-cysteine + [E2 ubiquitin-conjugating enzyme]-L-cysteine = [E1 ubiquitin-activating enzyme]-L-cysteine + S-ubiquitinyl-[E2 ubiquitin-conjugating enzyme]-L-cysteine.. It participates in protein modification; protein ubiquitination. Its function is as follows. Accepts ubiquitin from the E1 complex and catalyzes its covalent attachment to other proteins. In vitro catalyzes 'Lys-48'-, as well as 'Lys-63'-linked polyubiquitination. May be involved in degradation of muscle-specific proteins. Mediates polyubiquitination of CYP3A4. The polypeptide is Ubiquitin-conjugating enzyme E2 G1 (UBE2G1) (Homo sapiens (Human)).